The following is a 201-amino-acid chain: Potassium-transporting ATPase KdpC subunit (201 aa).

The helical transmembrane segment at 17–37 (LLTGLAYPLAMTGLAGILFPV) threads the bilayer.

The protein belongs to the KdpC family. As to quaternary structure, the system is composed of three essential subunits: KdpA, KdpB and KdpC.

The protein localises to the cell inner membrane. Part of the high-affinity ATP-driven potassium transport (or Kdp) system, which catalyzes the hydrolysis of ATP coupled with the electrogenic transport of potassium into the cytoplasm. This subunit acts as a catalytic chaperone that increases the ATP-binding affinity of the ATP-hydrolyzing subunit KdpB by the formation of a transient KdpB/KdpC/ATP ternary complex. This is Potassium-transporting ATPase KdpC subunit from Methylobacterium nodulans (strain LMG 21967 / CNCM I-2342 / ORS 2060).